Reading from the N-terminus, the 355-residue chain is Ubiquinone biosynthesis protein COQ4 homolog, mitochondrial (355 aa).

Residues His134, Asp135, His138, and Glu150 each coordinate Zn(2+).

The protein belongs to the COQ4 family. In terms of assembly, component of a multi-subunit COQ enzyme complex. The cofactor is Zn(2+).

The protein localises to the mitochondrion inner membrane. It catalyses the reaction a 4-hydroxy-3-methoxy-5-(all-trans-polyprenyl)benzoate + H(+) = a 2-methoxy-6-(all-trans-polyprenyl)phenol + CO2. It participates in cofactor biosynthesis; ubiquinone biosynthesis. Functionally, lyase that catalyzes the C1-decarboxylation of 4-hydroxy-3-methoxy-5-(all-trans-polyprenyl)benzoic acid into 2-methoxy-6-(all-trans-polyprenyl)phenol during ubiquinone biosynthesis. The chain is Ubiquinone biosynthesis protein COQ4 homolog, mitochondrial from Plasmodium chabaudi chabaudi.